A 785-amino-acid polypeptide reads, in one-letter code: MDAAIRGNDVIFVLKTIGVPSACRQNEDPRFVEAFKCDELERYIENNPECTLFESLRDEEAYSIVRIFMDVDLDACLDEIDYLTAIQDFIIEVSNCVARFAFTECGAIHENVIKSMRSNFSLTKSTNRDKTSFHIIFLDTYTTMDTLIAMKRTLLELSRSSENPLTRSIDTAVYRRKTTLRVVGTRKNPNCDTIHVMQPPHDNIEDYLFTYVDMNNNSYYFSLQQRLEDLVPDKLWEPGFISFEDAIKRVSKIFINSIINFNDLDENNFTTVPLVIDYVTPCALCKKRSHKHPHQLSLENGAIRIYKTGNPHSCKVKIVPLDGNKLFNIAQRILDTNSVLLTERGDHIVWINNSWKFNSEEPLITKLILSIRHQLPKEYSSELLCPRKRKTVEANIRDMLVDSVETDTYPDKLPFKNGVLDLVDGMFYSGDDAKKYTCTVSTGFKFDDTKFVEDSPEMEELMNIINDIQPLTDENKKNRELYEKTLSSCLCGATKGCLTFFFGETATGKSTTKRLLKSAIGDLFVETGQTILTDVLDKGPNPFIANMHLKRSVFCSELPDFACSGSKKIRSDNIKKLTEPCVIGRPCFSNKINNRNHATIIIDTNYKPVFDRIDNALMRRIAVVRFRTHFSQPSGREAAENNDAYDKVKLLDEGLDGKIQNNRYRFAFLYLLVKWYRKYHVPIMKLYPTPEEIPDFAFYLKIGTLLVSSSVKHIPLMTDLSKKGYILYDNVVTLPLTTFQQKISKYFNSRLFGHDIESFINRHKKFANVSDEYLQYIFIEDISSP.

Residue D170 is part of the active site. The segment at 342–469 is primase; the sequence is TERGDHIVWI…ELMNIINDIQ (128 aa). The SF3 helicase domain maps to 477–639; that stretch reads KNRELYEKTL…FSQPSGREAA (163 aa). 503–510 is a binding site for ATP; sequence GETATGKS.

It belongs to the orthopoxvirus OPG117 family. In terms of assembly, homomultimer; hexamer. Interacts with OPG148.

The protein resides in the host cytoplasm. Multifunctional protein required for genome uncoating and replication. Major viral uncoating protein that is required for the release of the viral genome from incoming viral cores containing the viral DNA genome. Possesses an ATPase activity that is required for hexamerization and uncoating. The sequence is that of Uncoating factor OPG117 (OPG117) from Bos taurus (Bovine).